Consider the following 194-residue polypeptide: Ras-related protein Rab-22A (194 aa).

Position 12-20 (12-20) interacts with GTP; it reads GDTGVGKSS. An Effector region motif is present at residues 34 to 42; that stretch reads INPTIGASF. GTP contacts are provided by residues 60-64, 118-121, and 148-150; these read DTAGQ, NKCD, and SAK. The disordered stretch occupies residues 170–194; sequence DANPASGGKGFKLRRQPSEPKRSCC. Basic and acidic residues predominate over residues 185–194; the sequence is QPSEPKRSCC. Residues Cys193 and Cys194 are each lipidated (S-geranylgeranyl cysteine).

The protein belongs to the small GTPase superfamily. Rab family. In terms of assembly, binds EEA1. Interacts (in its GTP-bound form) with RINL. Interacts directly with ZFYVE20. Interacts (in its GTP-bound form) with RABGEF1. In terms of tissue distribution, detected in brain and heart, and at lower levels in lung and spleen.

The protein localises to the endosome membrane. The protein resides in the cell membrane. It localises to the early endosome. Its subcellular location is the late endosome. It is found in the cell projection. The protein localises to the ruffle. The protein resides in the cytoplasmic vesicle. It localises to the phagosome. Its subcellular location is the phagosome membrane. Plays a role in endocytosis and intracellular protein transport. Mediates trafficking of TF from early endosomes to recycling endosomes. Required for NGF-mediated endocytosis of NTRK1, and subsequent neurite outgrowth. Binds GTP and GDP and has low GTPase activity. Alternates between a GTP-bound active form and a GDP-bound inactive form. The polypeptide is Ras-related protein Rab-22A (Rab22a) (Mus musculus (Mouse)).